Reading from the N-terminus, the 361-residue chain is 3-dehydroquinate synthase (361 aa).

Residues 106–110 (GVVGD), 130–131 (TT), lysine 143, and lysine 152 each bind NAD(+). 3 residues coordinate Zn(2+): glutamate 185, histidine 247, and histidine 264.

It belongs to the sugar phosphate cyclases superfamily. Dehydroquinate synthase family. Requires NAD(+) as cofactor. Co(2+) is required as a cofactor. The cofactor is Zn(2+).

The protein localises to the cytoplasm. The catalysed reaction is 7-phospho-2-dehydro-3-deoxy-D-arabino-heptonate = 3-dehydroquinate + phosphate. It functions in the pathway metabolic intermediate biosynthesis; chorismate biosynthesis; chorismate from D-erythrose 4-phosphate and phosphoenolpyruvate: step 2/7. Catalyzes the conversion of 3-deoxy-D-arabino-heptulosonate 7-phosphate (DAHP) to dehydroquinate (DHQ). This Gloeobacter violaceus (strain ATCC 29082 / PCC 7421) protein is 3-dehydroquinate synthase.